The primary structure comprises 292 residues: F-box protein SKIP28 (292 aa).

The F-box; degenerate domain occupies 21 to 79; it reads LIVLPYLHSLFELLSMIRVSRSLRDAIRDETALWTKLVIEPPLSSRLTDDILSEFSSKS.

In terms of assembly, part of a SCF (ASK-cullin-F-box) protein ligase complex. Interacts with SKP1A/ASK1 and CUL1.

The protein operates within protein modification; protein ubiquitination. Functionally, component of SCF(ASK-cullin-F-box) E3 ubiquitin ligase complexes, which may mediate the ubiquitination and subsequent proteasomal degradation of target proteins. Required during the endosperm development in embryos. This chain is F-box protein SKIP28 (SKIP28), found in Arabidopsis thaliana (Mouse-ear cress).